We begin with the raw amino-acid sequence, 417 residues long: Tol-Pal system protein TolB (417 aa).

Positions 1 to 16 (MKYLWLFLIYAIGLFA) are cleaved as a signal peptide.

Belongs to the TolB family. As to quaternary structure, the Tol-Pal system is composed of five core proteins: the inner membrane proteins TolA, TolQ and TolR, the periplasmic protein TolB and the outer membrane protein Pal. They form a network linking the inner and outer membranes and the peptidoglycan layer.

Its subcellular location is the periplasm. Part of the Tol-Pal system, which plays a role in outer membrane invagination during cell division and is important for maintaining outer membrane integrity. This Helicobacter pylori (strain J99 / ATCC 700824) (Campylobacter pylori J99) protein is Tol-Pal system protein TolB.